The sequence spans 447 residues: MQDHGSLPSVLDVHVNVAGRSSVLGKVKSRKARWSVRPSDMSNKTFNPIRAIVDNMKVKPNPNKTMIALSIGDPTVFGNLPTDPEVTQAMKDALDSGKFNGYVPSIGYLSSREEVASYYHCPEAPLEAKDVILTSGCSQAIELCLAVLANPGQNILVPRPGFSLYRTLAESMGIEVKLYNLLPEKNWEIDLKQLESLIDEKTVCLIVNNPSNPCGSVFSRRHLQKILAVAARQCVPILADEIYGDMVFSDSKFEPLATLSSKVPILSCGGLAKRWLVPGWRMGWILIHDRRDIFGNEIRDGLTKLSQRILGPCTLVQGALKSILCRTPRVFYHNTLSFLKSNADLCYGALAAIPGLRPIHPSGAMYLMVGIEMEHFPEFENDVEFTEQLVAEQSVHCLPATCFEYPNFFRVVITVPEVMMLEACSRIQEFCEQHYHCAEGSQEECDK.

Lys273 is subject to N6-(pyridoxal phosphate)lysine. Ser441 carries the phosphoserine modification.

The protein belongs to the class-I pyridoxal-phosphate-dependent aminotransferase family. In terms of assembly, homodimer. The cofactor is pyridoxal 5'-phosphate.

The catalysed reaction is L-tyrosine + 2-oxoglutarate = 3-(4-hydroxyphenyl)pyruvate + L-glutamate. It functions in the pathway amino-acid degradation; L-phenylalanine degradation; acetoacetate and fumarate from L-phenylalanine: step 2/6. Transaminase involved in tyrosine breakdown. Converts tyrosine to p-hydroxyphenylpyruvate. Can catalyze the reverse reaction, using glutamic acid, with 2-oxoglutarate as cosubstrate (in vitro). Has much lower affinity and transaminase activity for phenylalanine. The protein is Tyrosine aminotransferase (TAT) of Bos taurus (Bovine).